The primary structure comprises 273 residues: Undecaprenyl-diphosphatase (273 aa).

8 helical membrane passes run 3 to 23 (IILW…EFLP), 47 to 67 (ALDA…WQDI), 90 to 110 (LLLG…LLKL), 120 to 140 (IIAT…QWGS), 148 to 168 (IGIL…LPGA), 186 to 206 (PTAA…ATLV), 217 to 237 (LLIP…LAIA), and 249 to 269 (WVFI…IALG).

This sequence belongs to the UppP family.

The protein localises to the cell inner membrane. It catalyses the reaction di-trans,octa-cis-undecaprenyl diphosphate + H2O = di-trans,octa-cis-undecaprenyl phosphate + phosphate + H(+). Catalyzes the dephosphorylation of undecaprenyl diphosphate (UPP). Confers resistance to bacitracin. The sequence is that of Undecaprenyl-diphosphatase from Thermosynechococcus vestitus (strain NIES-2133 / IAM M-273 / BP-1).